The chain runs to 427 residues: Glutamate-1-semialdehyde 2,1-aminomutase (427 aa).

Lys-268 is modified (N6-(pyridoxal phosphate)lysine).

The protein belongs to the class-III pyridoxal-phosphate-dependent aminotransferase family. HemL subfamily. Pyridoxal 5'-phosphate is required as a cofactor.

Its subcellular location is the cytoplasm. It catalyses the reaction (S)-4-amino-5-oxopentanoate = 5-aminolevulinate. The protein operates within porphyrin-containing compound metabolism; protoporphyrin-IX biosynthesis; 5-aminolevulinate from L-glutamyl-tRNA(Glu): step 2/2. The polypeptide is Glutamate-1-semialdehyde 2,1-aminomutase (Methanococcus maripaludis (strain C6 / ATCC BAA-1332)).